The primary structure comprises 485 residues: Alpha-amylase (485 aa).

The signal sequence occupies residues 1–18 (MFLTSVLILCSLAALSLG). Position 19 is a pyrrolidone carboxylic acid (Q19). C46 and C102 are joined by a disulfide. 3 residues coordinate Ca(2+): N116, R164, and D173. C152 and C166 are disulfide-bonded. Chloride is bound at residue R201. D203 serves as the catalytic Nucleophile. H207 contacts Ca(2+). E240 functions as the Proton donor in the catalytic mechanism. Chloride-binding residues include N303 and R339. Residues C439 and C451 are joined by a disulfide bond. N448 carries N-linked (GlcNAc...) asparagine glycosylation.

This sequence belongs to the glycosyl hydrolase 13 family. Monomer. Ca(2+) serves as cofactor. It depends on chloride as a cofactor. As to expression, expressed in larval and adult gut.

Its subcellular location is the secreted. It carries out the reaction Endohydrolysis of (1-&gt;4)-alpha-D-glucosidic linkages in polysaccharides containing three or more (1-&gt;4)-alpha-linked D-glucose units.. The protein is Alpha-amylase of Phaedon cochleariae (Mustard beetle).